A 367-amino-acid polypeptide reads, in one-letter code: Peptide chain release factor 2 (367 aa).

Position 250 is an N5-methylglutamine (glutamine 250).

It belongs to the prokaryotic/mitochondrial release factor family. Post-translationally, methylated by PrmC. Methylation increases the termination efficiency of RF2.

The protein localises to the cytoplasm. Functionally, peptide chain release factor 2 directs the termination of translation in response to the peptide chain termination codons UGA and UAA. The sequence is that of Peptide chain release factor 2 from Saccharopolyspora erythraea (strain ATCC 11635 / DSM 40517 / JCM 4748 / NBRC 13426 / NCIMB 8594 / NRRL 2338).